The chain runs to 250 residues: Small ribosomal subunit protein uS2 (250 aa).

It belongs to the universal ribosomal protein uS2 family.

The sequence is that of Small ribosomal subunit protein uS2 from Variovorax paradoxus (strain S110).